Consider the following 690-residue polypeptide: Glycine--tRNA ligase beta subunit (690 aa).

Belongs to the class-II aminoacyl-tRNA synthetase family. Tetramer of two alpha and two beta subunits.

The protein resides in the cytoplasm. It carries out the reaction tRNA(Gly) + glycine + ATP = glycyl-tRNA(Gly) + AMP + diphosphate. The chain is Glycine--tRNA ligase beta subunit from Desulfitobacterium hafniense (strain Y51).